Reading from the N-terminus, the 188-residue chain is Cell division protein SepF (188 aa).

The segment covering Thr152–Val162 has biased composition (polar residues). Positions Thr152 to Leu188 are disordered.

Belongs to the SepF family. Homodimer. Interacts with FtsZ.

It is found in the cytoplasm. In terms of biological role, cell division protein that is part of the divisome complex and is recruited early to the Z-ring. Probably stimulates Z-ring formation, perhaps through the cross-linking of FtsZ protofilaments. Its function overlaps with FtsA. This is Cell division protein SepF from Parasynechococcus marenigrum (strain WH8102).